Here is a 261-residue protein sequence, read N- to C-terminus: Cytosolic Fe-S cluster assembly factor Nubp2 homolog (261 aa).

14 to 21 contributes to the ATP binding site; sequence GKGGVGKS. Cys188 and Cys191 together coordinate [4Fe-4S] cluster.

Belongs to the Mrp/NBP35 ATP-binding proteins family. NUBP2/CFD1 subfamily. Heterotetramer of 2 Nubp1 and 2 Nubp2 chains. Requires [4Fe-4S] cluster as cofactor.

It localises to the cytoplasm. In terms of biological role, component of the cytosolic iron-sulfur (Fe/S) protein assembly (CIA) machinery. Required for maturation of extramitochondrial Fe-S proteins. The Nubp1-Nubp2 heterotetramer forms a Fe-S scaffold complex, mediating the de novo assembly of an Fe-S cluster and its transfer to target apoproteins. This Drosophila willistoni (Fruit fly) protein is Cytosolic Fe-S cluster assembly factor Nubp2 homolog.